Reading from the N-terminus, the 172-residue chain is MILNMTINYIKKDRYKVLNLVLITISIIALSTAYIAEYIFHYTPCPLCVYERFPYLMLIKISLTALIIRQLNKYTLILILITILSSCILSTYHSFVERGIVQPSAICSSMIRIPQGLSIQHIKQMFYSQPITSCTKPAIKILGISMTEYNLLLNICLLIFLGLILFYPKSNK.

The next 4 helical transmembrane spans lie at 20 to 40 (LVLI…EYIF), 48 to 68 (CVYE…ALII), 76 to 96 (LILI…HSFV), and 146 to 166 (MTEY…LILF).

It localises to the cell membrane. This is an uncharacterized protein from Rickettsia prowazekii (strain Madrid E).